A 669-amino-acid polypeptide reads, in one-letter code: Probable pectinesterase/pectinesterase inhibitor 21 (669 aa).

The chain crosses the membrane as a helical span at residues 16-36 (IVITISSVLLISMVVAVTVGV). N-linked (GlcNAc...) asparagine glycosylation is found at Asn-52, Asn-81, Asn-94, Asn-281, and Asn-300. Positions 52–205 (NASVKAVKDV…IELTHNGLAI (154 aa)) are pectinesterase inhibitor 21. Residues 255–551 (DIVVAQDGSG…FTPAQYIQGD (297 aa)) are pectinesterase 21. The substrate site is built by Thr-330 and Gln-360. Asp-383 acts as the Proton donor; for pectinesterase activity in catalysis. Cys-397 and Cys-417 form a disulfide bridge. Asp-404 acts as the Nucleophile; for pectinesterase activity in catalysis. An N-linked (GlcNAc...) asparagine glycan is attached at Asn-416. Residues Arg-472 and Trp-474 each coordinate substrate. The segment at 615 to 669 (AYTGTASPESSIKVSSSTETASPESSFTEASTASPESSIMVASTESSGSFFSMFT) is disordered. Residues 616–628 (YTGTASPESSIKV) show a composition bias toward polar residues. Low complexity predominate over residues 629–652 (SSSTETASPESSFTEASTASPESS). Polar residues predominate over residues 654–669 (MVASTESSGSFFSMFT).

It in the N-terminal section; belongs to the PMEI family. In the C-terminal section; belongs to the pectinesterase family. Expressed in flower buds.

The protein localises to the membrane. The enzyme catalyses [(1-&gt;4)-alpha-D-galacturonosyl methyl ester](n) + n H2O = [(1-&gt;4)-alpha-D-galacturonosyl](n) + n methanol + n H(+). Its pathway is glycan metabolism; pectin degradation; 2-dehydro-3-deoxy-D-gluconate from pectin: step 1/5. Its function is as follows. Acts in the modification of cell walls via demethylesterification of cell wall pectin. This chain is Probable pectinesterase/pectinesterase inhibitor 21 (PME21), found in Arabidopsis thaliana (Mouse-ear cress).